The following is a 319-amino-acid chain: Methionyl-tRNA formyltransferase (319 aa).

116–119 (SLLP) contributes to the (6S)-5,6,7,8-tetrahydrofolate binding site.

Belongs to the Fmt family.

It catalyses the reaction L-methionyl-tRNA(fMet) + (6R)-10-formyltetrahydrofolate = N-formyl-L-methionyl-tRNA(fMet) + (6S)-5,6,7,8-tetrahydrofolate + H(+). In terms of biological role, attaches a formyl group to the free amino group of methionyl-tRNA(fMet). The formyl group appears to play a dual role in the initiator identity of N-formylmethionyl-tRNA by promoting its recognition by IF2 and preventing the misappropriation of this tRNA by the elongation apparatus. The protein is Methionyl-tRNA formyltransferase of Wigglesworthia glossinidia brevipalpis.